Here is a 111-residue protein sequence, read N- to C-terminus: FK506-binding protein 1 (111 aa).

Residues 1-20 form a disordered region; sequence MGVEKTIITQGSGPSPQVGQ. Residues 7–20 show a composition bias toward polar residues; it reads IITQGSGPSPQVGQ. Residues 19–111 form the PPIase FKBP-type domain; the sequence is GQKVTMEYTG…IFDVELKKIG (93 aa).

It belongs to the FKBP-type PPIase family. FKBP1 subfamily.

The protein localises to the cytoplasm. The enzyme catalyses [protein]-peptidylproline (omega=180) = [protein]-peptidylproline (omega=0). Inhibited by both FK506 and rapamycin. In terms of biological role, PPIases accelerate the folding of proteins. It catalyzes the cis-trans isomerization of proline imidic peptide bonds in oligopeptides. In Gibberella zeae (strain ATCC MYA-4620 / CBS 123657 / FGSC 9075 / NRRL 31084 / PH-1) (Wheat head blight fungus), this protein is FK506-binding protein 1 (FPR1).